The primary structure comprises 316 residues: Tyrosine recombinase XerC (316 aa).

The Core-binding (CB) domain occupies 11–97 (SGLRKPLDQF…SLRSFFDFLI (87 aa)). Residues 118–298 (PLPKNLDVDE…DFQHLADVYD (181 aa)) form the Tyr recombinase domain. Residues arginine 157, lysine 181, histidine 250, arginine 253, and histidine 276 contribute to the active site. Tyrosine 285 acts as the O-(3'-phospho-DNA)-tyrosine intermediate in catalysis.

The protein belongs to the 'phage' integrase family. XerC subfamily. As to quaternary structure, forms a cyclic heterotetrameric complex composed of two molecules of XerC and two molecules of XerD.

It localises to the cytoplasm. In terms of biological role, site-specific tyrosine recombinase, which acts by catalyzing the cutting and rejoining of the recombining DNA molecules. The XerC-XerD complex is essential to convert dimers of the bacterial chromosome into monomers to permit their segregation at cell division. It also contributes to the segregational stability of plasmids. This chain is Tyrosine recombinase XerC, found in Vibrio vulnificus (strain CMCP6).